The following is a 200-amino-acid chain: GTP cyclohydrolase-2 (200 aa).

GTP is bound at residue 49–53 (RVHSE). 3 residues coordinate Zn(2+): Cys-54, Cys-65, and Cys-67. GTP is bound by residues Gln-70, 92-94 (EGR), and Thr-114. Catalysis depends on Asp-126, which acts as the Proton acceptor. Arg-128 functions as the Nucleophile in the catalytic mechanism. GTP contacts are provided by Thr-149 and Lys-154.

It belongs to the GTP cyclohydrolase II family. In terms of assembly, homodimer. Requires Zn(2+) as cofactor.

The catalysed reaction is GTP + 4 H2O = 2,5-diamino-6-hydroxy-4-(5-phosphoribosylamino)-pyrimidine + formate + 2 phosphate + 3 H(+). Its pathway is cofactor biosynthesis; riboflavin biosynthesis; 5-amino-6-(D-ribitylamino)uracil from GTP: step 1/4. Its function is as follows. Catalyzes the conversion of GTP to 2,5-diamino-6-ribosylamino-4(3H)-pyrimidinone 5'-phosphate (DARP), formate and pyrophosphate. This chain is GTP cyclohydrolase-2, found in Klebsiella pneumoniae (strain 342).